We begin with the raw amino-acid sequence, 301 residues long: Acetylglutamate kinase (301 aa).

Substrate is bound by residues 72–73, arginine 94, and asparagine 199; that span reads GG.

This sequence belongs to the acetylglutamate kinase family. ArgB subfamily.

The protein localises to the cytoplasm. The enzyme catalyses N-acetyl-L-glutamate + ATP = N-acetyl-L-glutamyl 5-phosphate + ADP. The protein operates within amino-acid biosynthesis; L-arginine biosynthesis; N(2)-acetyl-L-ornithine from L-glutamate: step 2/4. Functionally, catalyzes the ATP-dependent phosphorylation of N-acetyl-L-glutamate. This Azorhizobium caulinodans (strain ATCC 43989 / DSM 5975 / JCM 20966 / LMG 6465 / NBRC 14845 / NCIMB 13405 / ORS 571) protein is Acetylglutamate kinase.